Consider the following 377-residue polypeptide: Actin-related protein 2/3 complex subunit 1 (377 aa).

WD repeat units lie at residues 9 to 48 (ILPKPSYEHAFNSQRTEFVTTTATNQVELYEQDGNGWKHA), 53 to 92 (DHDKIVTCVDWAPKSNRIVTCSQDRNAYVYEKRPDGTWKQ), 98 to 139 (RLNR…WVSK), 144 to 183 (PLRSTILSLDWHPNNVLLAAGCADRKAYVLSAYVRDVDAK), and 203 to 242 (PSGGWVHAVGFSPSGNALAYAGHDSSVTIAYPSAPEQPPR). Positions 293 to 313 (GTSKTSFTHTGNTGEGREEEG) are disordered. One copy of the WD 6 repeat lies at 342-376 (VHQNMIATLRPYAGTPGNITAFTSSGTDGRVVLWT).

This sequence belongs to the WD repeat ARPC1 family. In terms of assembly, component of the Arp2/3 complex composed of arp2, act2, arc1/p41-ARC, arc2/p34-ARC, arc3/p21-ARC, arc4/p20-ARC and arc5/p16-ARC.

Its subcellular location is the cytoplasm. The protein localises to the cytoskeleton. It is found in the actin patch. In terms of biological role, functions as a component of the Arp2/3 complex which is involved in regulation of actin polymerization and together with an activating nucleation-promoting factor (NPF) mediates the formation of branched actin networks. This chain is Actin-related protein 2/3 complex subunit 1 (arc1), found in Schizosaccharomyces pombe (strain 972 / ATCC 24843) (Fission yeast).